The following is a 40-amino-acid chain: Protamine-2 (40 aa).

The tract at residues 1–40 (MPPRRKRVSSAPRRRRRTYRRTTAHKHQERPVHRRRRRRH) is disordered.

Testis.

It localises to the nucleus. Its subcellular location is the chromosome. Functionally, protamines substitute for histones in the chromatin of sperm during the haploid phase of spermatogenesis. They compact sperm DNA into a highly condensed, stable and inactive complex. The sequence is that of Protamine-2 (PBP2) from Bufo japonicus (Japanese common toad).